A 667-amino-acid chain; its full sequence is Long-chain fatty acid transport protein 3 (667 aa).

A helical transmembrane segment spans residues 3 to 23; sequence ALLLLLPLLLLLPLLLKLDVW. The segment at 114-144 is disordered; that stretch reads TGGRRGSGRGSTEEGARVAPPAGDAAARGTT. Residues 130–144 are compositionally biased toward low complexity; sequence RVAPPAGDAAARGTT. ATP contacts are provided by residues 272 to 276, His315, Thr412, Asp512, Arg527, and Lys619; that span reads TSGTT.

Belongs to the ATP-dependent AMP-binding enzyme family. In terms of tissue distribution, expressed at high levels in adrenal gland, testis and ovary. Expressed at lower levels in adult brain. Found in adrenal cortical cells, spermatocytes and interstitial cells of the testis, theca cells of the ovary, cerebral cortical neurons, and cerebellar Purkinje cells (at protein level).

It localises to the mitochondrion membrane. It catalyses the reaction a fatty acid(in) = a fatty acid(out). The catalysed reaction is a long-chain fatty acid + ATP + CoA = a long-chain fatty acyl-CoA + AMP + diphosphate. It carries out the reaction (5Z,8Z,11Z,14Z)-eicosatetraenoate + ATP + CoA = (5Z,8Z,11Z,14Z)-eicosatetraenoyl-CoA + AMP + diphosphate. The enzyme catalyses hexadecanoate + ATP + CoA = hexadecanoyl-CoA + AMP + diphosphate. It catalyses the reaction (9Z)-octadecenoate + ATP + CoA = (9Z)-octadecenoyl-CoA + AMP + diphosphate. The catalysed reaction is (9Z,12Z)-octadecadienoate + ATP + CoA = (9Z,12Z)-octadecadienoyl-CoA + AMP + diphosphate. It carries out the reaction a very long-chain fatty acid + ATP + CoA = a very long-chain fatty acyl-CoA + AMP + diphosphate. The enzyme catalyses tetracosanoate + ATP + CoA = tetracosanoyl-CoA + AMP + diphosphate. Functionally, mainly functions as an acyl-CoA ligase catalyzing the ATP-dependent formation of fatty acyl-CoA using LCFA and very-long-chain fatty acids (VLCFA) as substrates. Can mediate the levels of long-chain fatty acids (LCFA) in the cell by facilitating their transport across membranes. In Mus musculus (Mouse), this protein is Long-chain fatty acid transport protein 3 (Slc27a3).